Here is a 360-residue protein sequence, read N- to C-terminus: POU domain, class 5, transcription factor 1 (360 aa).

Disordered regions lie at residues 1–52 and 88–114; these read MAGH…PGVG and GGLETSQPEGEAGVGVESNSDGASPEP. The 9aaTAD motif lies at 4-12; sequence HLASDFAFS. A Phosphoserine; by MAPK modification is found at S111. K123 participates in a covalent cross-link: Glycyl lysine isopeptide (Lys-Gly) (interchain with G-Cter in SUMO). Residues 138–212 form the POU-specific domain; sequence DIKALQKELE…LLQKWVEEAD (75 aa). The DNA site is built by R157 and Q164. DNA-binding regions lie at residues 180-186 and 193-196; these read SQTTICR and SFKN. Residues 230–289 constitute a DNA-binding region (homeobox); that stretch reads RKRKRTSIENRVRGNLENLFLQCPKPTLQQISHIAQQLGLEKDVVRVWFCNRRQKGKRSS. T235 carries the phosphothreonine modification. 4 positions are modified to phosphoserine: S236, S289, S290, and S355.

This sequence belongs to the POU transcription factor family. Class-5 subfamily. As to quaternary structure, interacts with PKM. Interacts with WWP2. Interacts with UBE2I and ZSCAN10. Interacts with PCGF1. Interacts with ESRRB; recruits ESRRB near the POU5F1-SOX2 element in the NANOG proximal promoter; the interaction is DNA independent. Interacts with ZNF322. Interacts with MAPK8 and MAPK9; the interaction allows MAPK8 and MAPK9 to phosphorylate POU5F1 on Ser-355. Interacts (when phosphorylated on Ser-355) with FBXW8. Interacts with FBXW4. Interacts with SOX2 and SOX15; binds synergistically with either SOX2 or SOX15 to DNA. Interacts with DDX56. In terms of processing, sumoylation enhances the protein stability, DNA binding and transactivation activity. Sumoylation is required for enhanced YES1 expression. Post-translationally, ubiquitinated; undergoes 'Lys-63'-linked polyubiquitination by WWP2 leading to proteasomal degradation. ERK1/2-mediated phosphorylation at Ser-111 promotes nuclear exclusion and proteasomal degradation. Phosphorylation at Thr-235 and Ser-236 decrease DNA-binding and alters ability to activate transcription. In terms of tissue distribution, expressed in developing brain. Highest levels found in specific cell layers of the cortex, the olfactory bulb, the hippocampus and the cerebellum. Low levels of expression in adult tissues.

It is found in the cytoplasm. Its subcellular location is the nucleus. In terms of biological role, transcription factor that binds to the octamer motif (5'-ATTTGCAT-3'). Forms a trimeric complex with SOX2 or SOX15 on DNA and controls the expression of a number of genes involved in embryonic development such as YES1, FGF4, UTF1 and ZFP206. Critical for early embryogenesis and for embryonic stem cell pluripotency. The chain is POU domain, class 5, transcription factor 1 (POU5F1) from Homo sapiens (Human).